The primary structure comprises 248 residues: tRNA (guanine-N(1)-)-methyltransferase (248 aa).

Residues glycine 113 and 133–138 each bind S-adenosyl-L-methionine; that span reads IGDFVL.

Belongs to the RNA methyltransferase TrmD family. Homodimer.

The protein resides in the cytoplasm. The enzyme catalyses guanosine(37) in tRNA + S-adenosyl-L-methionine = N(1)-methylguanosine(37) in tRNA + S-adenosyl-L-homocysteine + H(+). Specifically methylates guanosine-37 in various tRNAs. The polypeptide is tRNA (guanine-N(1)-)-methyltransferase (Dehalococcoides mccartyi (strain ATCC BAA-2100 / JCM 16839 / KCTC 5957 / BAV1)).